The sequence spans 446 residues: Exodeoxyribonuclease 7 large subunit (446 aa).

This sequence belongs to the XseA family. Heterooligomer composed of large and small subunits.

It is found in the cytoplasm. It catalyses the reaction Exonucleolytic cleavage in either 5'- to 3'- or 3'- to 5'-direction to yield nucleoside 5'-phosphates.. Bidirectionally degrades single-stranded DNA into large acid-insoluble oligonucleotides, which are then degraded further into small acid-soluble oligonucleotides. The chain is Exodeoxyribonuclease 7 large subunit from Streptococcus equi subsp. zooepidemicus (strain MGCS10565).